The primary structure comprises 142 residues: Large ribosomal subunit protein uL13 (142 aa).

The protein belongs to the universal ribosomal protein uL13 family. In terms of assembly, part of the 50S ribosomal subunit.

In terms of biological role, this protein is one of the early assembly proteins of the 50S ribosomal subunit, although it is not seen to bind rRNA by itself. It is important during the early stages of 50S assembly. This is Large ribosomal subunit protein uL13 from Burkholderia pseudomallei (strain 1106a).